The primary structure comprises 154 residues: Keratin-associated protein 9-4 (154 aa).

Tandem repeats lie at residues cysteine 8 to threonine 12, cysteine 13 to threonine 17, cysteine 18 to threonine 22, cysteine 37 to serine 41, cysteine 42 to serine 46, cysteine 51 to threonine 55, cysteine 56 to threonine 60, cysteine 61 to threonine 65, cysteine 70 to serine 74, cysteine 75 to proline 79, cysteine 80 to threonine 84, cysteine 85 to serine 89, cysteine 129 to alanine 133, cysteine 134 to threonine 138, and cysteine 148 to phenylalanine 152. The interval cysteine 8–phenylalanine 152 is 15 X 5 AA repeats of C-C-[RQVGE]-[SPTN]-[TASPF].

Belongs to the KRTAP type 9 family. As to quaternary structure, interacts with hair keratins.

In the hair cortex, hair keratin intermediate filaments are embedded in an interfilamentous matrix, consisting of hair keratin-associated proteins (KRTAP), which are essential for the formation of a rigid and resistant hair shaft through their extensive disulfide bond cross-linking with abundant cysteine residues of hair keratins. The matrix proteins include the high-sulfur and high-glycine-tyrosine keratins. The protein is Keratin-associated protein 9-4 (KRTAP9-4) of Homo sapiens (Human).